The primary structure comprises 176 residues: Small ribosomal subunit protein uS5 (176 aa).

Positions 11 to 74 constitute an S5 DRBM domain; sequence LSEVLVDVNR…QAAKKRMMKV (64 aa).

It belongs to the universal ribosomal protein uS5 family. In terms of assembly, part of the 30S ribosomal subunit. Contacts proteins S4 and S8.

In terms of biological role, with S4 and S12 plays an important role in translational accuracy. Functionally, located at the back of the 30S subunit body where it stabilizes the conformation of the head with respect to the body. The protein is Small ribosomal subunit protein uS5 of Rickettsia peacockii (strain Rustic).